Here is a 192-residue protein sequence, read N- to C-terminus: Large ribosomal subunit protein uL5 (192 aa).

The protein belongs to the universal ribosomal protein uL5 family. As to quaternary structure, part of the 50S ribosomal subunit; part of the 5S rRNA/L5/L18/L25 subcomplex. Contacts the 5S rRNA and the P site tRNA. Forms a bridge to the 30S subunit in the 70S ribosome.

Functionally, this is one of the proteins that bind and probably mediate the attachment of the 5S RNA into the large ribosomal subunit, where it forms part of the central protuberance. In the 70S ribosome it contacts protein S13 of the 30S subunit (bridge B1b), connecting the 2 subunits; this bridge is implicated in subunit movement. Contacts the P site tRNA; the 5S rRNA and some of its associated proteins might help stabilize positioning of ribosome-bound tRNAs. The protein is Large ribosomal subunit protein uL5 of Zymomonas mobilis subsp. mobilis (strain ATCC 31821 / ZM4 / CP4).